The primary structure comprises 569 residues: 4-hydroxy-7-methoxy-3-oxo-3,4-dihydro-2H-1,4-benzoxazin-2-yl glucoside beta-D-glucosidase 1a, chloroplastic (569 aa).

The N-terminal 50 residues, 1-50 (MALLAAATLNPTTHLSLRSRAGRNSENLWLRSAASSQKSKGRFCNLTIRA), are a transit peptide targeting the chloroplast. A beta-D-glucoside is bound by residues Gln-92, His-194, and 239–240 (NE). The Proton donor role is filled by Glu-240. Cys-259 and Cys-265 are oxidised to a cystine. Residues Tyr-383, Glu-456, Trp-504, 511 to 512 (EW), and Phe-520 contribute to the a beta-D-glucoside site. The Nucleophile role is filled by Glu-456.

Belongs to the glycosyl hydrolase 1 family. Homo- and heterohexamers. Expressed in young seedlings early after germination.

Its subcellular location is the plastid. The protein localises to the chloroplast. It catalyses the reaction Hydrolysis of terminal, non-reducing beta-D-glucosyl residues with release of beta-D-glucose.. The enzyme catalyses DIMBOA beta-D-glucoside + H2O = DIMBOA + D-glucose. It carries out the reaction DIBOA beta-D-glucoside + H2O = DIBOA + D-glucose. In terms of biological role, acts in defense of young plant parts against pests via the production of hydroxamic acids from hydroxamic acid glucosides. Enzymatic activity is highly correlated with plant growth. The preferred substrate is DIMBOA-beta-D-glucoside. This is 4-hydroxy-7-methoxy-3-oxo-3,4-dihydro-2H-1,4-benzoxazin-2-yl glucoside beta-D-glucosidase 1a, chloroplastic (GLU1A) from Triticum aestivum (Wheat).